A 391-amino-acid chain; its full sequence is ATP phosphoribosyltransferase regulatory subunit (391 aa).

Belongs to the class-II aminoacyl-tRNA synthetase family. HisZ subfamily. As to quaternary structure, heteromultimer composed of HisG and HisZ subunits.

It localises to the cytoplasm. Its pathway is amino-acid biosynthesis; L-histidine biosynthesis; L-histidine from 5-phospho-alpha-D-ribose 1-diphosphate: step 1/9. Functionally, required for the first step of histidine biosynthesis. May allow the feedback regulation of ATP phosphoribosyltransferase activity by histidine. This Nitrosomonas europaea (strain ATCC 19718 / CIP 103999 / KCTC 2705 / NBRC 14298) protein is ATP phosphoribosyltransferase regulatory subunit.